We begin with the raw amino-acid sequence, 243 residues long: Small ribosomal subunit protein uS3 (243 aa).

The 72-residue stretch at 39–110 (IRTFIQKKYS…QVRINVVEVE (72 aa)) folds into the KH type-2 domain. The disordered stretch occupies residues 221 to 243 (GAIPRRKGSRKPQQFEDRSNENS). A compositionally biased stretch (basic and acidic residues) spans 233-243 (QQFEDRSNENS).

Belongs to the universal ribosomal protein uS3 family. As to quaternary structure, part of the 30S ribosomal subunit. Forms a tight complex with proteins S10 and S14.

In terms of biological role, binds the lower part of the 30S subunit head. Binds mRNA in the 70S ribosome, positioning it for translation. This is Small ribosomal subunit protein uS3 from Prochlorococcus marinus subsp. pastoris (strain CCMP1986 / NIES-2087 / MED4).